Consider the following 333-residue polypeptide: Biotin synthase (333 aa).

The 228-residue stretch at 51–278 (RAIQLSTLMS…KSYVRLSAGR (228 aa)) folds into the Radical SAM core domain. Cys-66, Cys-70, and Cys-73 together coordinate [4Fe-4S] cluster. Residues Cys-110, Cys-141, Cys-201, and Arg-273 each contribute to the [2Fe-2S] cluster site.

Belongs to the radical SAM superfamily. Biotin synthase family. Homodimer. [4Fe-4S] cluster serves as cofactor. It depends on [2Fe-2S] cluster as a cofactor.

It carries out the reaction (4R,5S)-dethiobiotin + (sulfur carrier)-SH + 2 reduced [2Fe-2S]-[ferredoxin] + 2 S-adenosyl-L-methionine = (sulfur carrier)-H + biotin + 2 5'-deoxyadenosine + 2 L-methionine + 2 oxidized [2Fe-2S]-[ferredoxin]. Its pathway is cofactor biosynthesis; biotin biosynthesis; biotin from 7,8-diaminononanoate: step 2/2. Functionally, catalyzes the conversion of dethiobiotin (DTB) to biotin by the insertion of a sulfur atom into dethiobiotin via a radical-based mechanism. This is Biotin synthase from Haemophilus influenzae (strain 86-028NP).